A 186-amino-acid polypeptide reads, in one-letter code: Nuclear transcription factor Y subunit C-5 (186 aa).

The disordered stretch occupies residues 166 to 186 (QMPGAWTEEDATGANGGNGGN).

This sequence belongs to the NFYC/HAP5 subunit family. Heterotrimeric transcription factor composed of three components, NF-YA, NF-YB and NF-YC. NF-YB and NF-YC must interact and dimerize for NF-YA association and DNA binding. As to expression, expressed in inflorescences and flowers.

Its subcellular location is the nucleus. Its function is as follows. Stimulates the transcription of various genes by recognizing and binding to a CCAAT motif in promoters. The protein is Nuclear transcription factor Y subunit C-5 (NFYC5) of Arabidopsis thaliana (Mouse-ear cress).